Reading from the N-terminus, the 153-residue chain is D-aminoacyl-tRNA deacylase (153 aa).

The short motif at 137–138 (GP) is the Gly-cisPro motif, important for rejection of L-amino acids element.

This sequence belongs to the DTD family. Homodimer.

The protein resides in the cytoplasm. The enzyme catalyses glycyl-tRNA(Ala) + H2O = tRNA(Ala) + glycine + H(+). It carries out the reaction a D-aminoacyl-tRNA + H2O = a tRNA + a D-alpha-amino acid + H(+). Its function is as follows. An aminoacyl-tRNA editing enzyme that deacylates mischarged D-aminoacyl-tRNAs. Also deacylates mischarged glycyl-tRNA(Ala), protecting cells against glycine mischarging by AlaRS. Acts via tRNA-based rather than protein-based catalysis; rejects L-amino acids rather than detecting D-amino acids in the active site. By recycling D-aminoacyl-tRNA to D-amino acids and free tRNA molecules, this enzyme counteracts the toxicity associated with the formation of D-aminoacyl-tRNA entities in vivo and helps enforce protein L-homochirality. The sequence is that of D-aminoacyl-tRNA deacylase from Methylococcus capsulatus (strain ATCC 33009 / NCIMB 11132 / Bath).